Here is a 372-residue protein sequence, read N- to C-terminus: Putative glutamate--cysteine ligase 2 (372 aa).

The protein belongs to the glutamate--cysteine ligase type 2 family. YbdK subfamily. As to quaternary structure, homodimer.

It carries out the reaction L-cysteine + L-glutamate + ATP = gamma-L-glutamyl-L-cysteine + ADP + phosphate + H(+). Its function is as follows. ATP-dependent carboxylate-amine ligase which exhibits weak glutamate--cysteine ligase activity. This chain is Putative glutamate--cysteine ligase 2 (ybdK), found in Salmonella typhimurium (strain LT2 / SGSC1412 / ATCC 700720).